The following is a 73-amino-acid chain: Putative membrane protein insertion efficiency factor (73 aa).

It belongs to the UPF0161 family.

It localises to the cell inner membrane. Its function is as follows. Could be involved in insertion of integral membrane proteins into the membrane. The chain is Putative membrane protein insertion efficiency factor from Jannaschia sp. (strain CCS1).